We begin with the raw amino-acid sequence, 264 residues long: THAP domain-containing protein 10 (264 aa).

The segment at 1 to 90 (MPARCVAAHC…LVAGAVPTLH (90 aa)) adopts a THAP-type zinc-finger fold. Disordered regions lie at residues 90-136 (HRVP…PRAG) and 160-195 (TQPH…KRPR). A compositionally biased stretch (basic and acidic residues) spans 99–122 (GGEEGDQAGRPDTRGELQAARHSE). Positions 160 to 175 (TQPHADNPSNTVTSVP) are enriched in polar residues.

The protein is THAP domain-containing protein 10 (THAP10) of Pongo abelii (Sumatran orangutan).